Here is a 756-residue protein sequence, read N- to C-terminus: Sodium/hydrogen exchanger 8 (756 aa).

At 1 to 31 the chain is on the extracellular side; it reads MTSIIGAALPYKSPEKAIASSSYSAENDSSP. Asparagine 27 is a glycosylation site (N-linked (GlcNAc...) asparagine). The helical transmembrane segment at 32–52 threads the bilayer; that stretch reads VDAVIFAGTSLVLGTACRYLF. The Cytoplasmic portion of the chain corresponds to 53-56; it reads NGTR. Residues 57–77 traverse the membrane as a helical segment; sequence VPYTVVLLVIGIFLGSLEYGT. The Extracellular portion of the chain corresponds to 78 to 89; sequence KHNLGKLGHGIR. Residues 90-110 traverse the membrane as a helical segment; sequence IWNGINPDLLLAVFLPVLLFE. Residues 111-125 are Cytoplasmic-facing; that stretch reads SSFSMDVHQIKRCMG. A helical transmembrane segment spans residues 126-146; that stretch reads QMVLLAGPGVLISTFCLGALI. The Extracellular segment spans residues 147–157; it reads KLTFPYNWDWK. Residues 158–178 traverse the membrane as a helical segment; the sequence is TSLLLGGLLGATDPVAVVALL. At 179 to 194 the chain is on the cytoplasmic side; it reads KELGASKKMTTLIDGE. Residues 195–215 traverse the membrane as a helical segment; it reads SLMNDGVSVVVFQLFFKMVMG. The Extracellular portion of the chain corresponds to 216–225; it reads HNSDWGSIIK. A helical membrane pass occupies residues 226-248; sequence FLVQNSFGAVGIGLAFGIASVFW. At 249 to 251 the chain is on the cytoplasmic side; the sequence is LKF. Residues 252–271 traverse the membrane as a helical segment; the sequence is IFNDTVAQITVTLSASYFAY. The Extracellular segment spans residues 272–276; the sequence is YTAQE. A helical transmembrane segment spans residues 277-297; it reads WAGVSGILTVMILGMFFAAFA. Residues 298-311 lie on the Cytoplasmic side of the membrane; the sequence is RTAFKGDSHQSLHH. Residues 312 to 332 form a helical membrane-spanning segment; it reads FWEMAAYIANTLVFMLSGVII. Residues 333 to 350 are Extracellular-facing; it reads AESVLSGQTISYKGNSWS. A helical membrane pass occupies residues 351 to 371; it reads FLFLLYLYVQLSRCVVVGVLY. Residues 372–385 are Cytoplasmic-facing; sequence PLLCRSGYGLDWKE. Residues 386–406 form a helical membrane-spanning segment; the sequence is SIILTWSGLRGAVSLSLALSV. The Extracellular portion of the chain corresponds to 407–422; that stretch reads KQSSGNSYLSSDTGTR. Residues 423–443 form a helical membrane-spanning segment; sequence FLFLTGGIVFLTLVVNGSTTQ. At 444 to 756 the chain is on the cytoplasmic side; it reads LLLHLLRMDT…RSLAIGETDA (313 aa).

The protein belongs to the monovalent cation:proton antiporter 1 (CPA1) transporter (TC 2.A.36) family.

Its subcellular location is the cell membrane. It carries out the reaction Na(+)(in) + H(+)(out) = Na(+)(out) + H(+)(in). The catalysed reaction is K(+)(in) + H(+)(out) = K(+)(out) + H(+)(in). May act in low affinity electroneutral exchange of protons for cations such as Na(+) or K(+) across membranes. May also exchange Li(+) and Cs(+) with a lower affinity. The protein is Sodium/hydrogen exchanger 8 (NHX8) of Arabidopsis thaliana (Mouse-ear cress).